A 414-amino-acid polypeptide reads, in one-letter code: Serine hydroxymethyltransferase (414 aa).

(6S)-5,6,7,8-tetrahydrofolate is bound by residues Leu-121 and 125–127 (GHL). Lys-230 is subject to N6-(pyridoxal phosphate)lysine.

It belongs to the SHMT family. As to quaternary structure, homodimer. Pyridoxal 5'-phosphate is required as a cofactor.

Its subcellular location is the cytoplasm. The enzyme catalyses (6R)-5,10-methylene-5,6,7,8-tetrahydrofolate + glycine + H2O = (6S)-5,6,7,8-tetrahydrofolate + L-serine. It functions in the pathway one-carbon metabolism; tetrahydrofolate interconversion. Its pathway is amino-acid biosynthesis; glycine biosynthesis; glycine from L-serine: step 1/1. Functionally, catalyzes the reversible interconversion of serine and glycine with tetrahydrofolate (THF) serving as the one-carbon carrier. This reaction serves as the major source of one-carbon groups required for the biosynthesis of purines, thymidylate, methionine, and other important biomolecules. Also exhibits THF-independent aldolase activity toward beta-hydroxyamino acids, producing glycine and aldehydes, via a retro-aldol mechanism. The protein is Serine hydroxymethyltransferase of Acidithiobacillus ferrooxidans (strain ATCC 23270 / DSM 14882 / CIP 104768 / NCIMB 8455) (Ferrobacillus ferrooxidans (strain ATCC 23270)).